The sequence spans 831 residues: Prolactin receptor (831 aa).

The signal sequence occupies residues 1-23 (MKQDLISSVQIILFLPLTTVGLA). Residues 24-438 (GQSFPGKPKI…QIPNDFRVKD (415 aa)) lie on the Extracellular side of the membrane. Fibronectin type-III domains follow at residues 30-128 (KPKI…VQPG), 129-227 (SPVN…IPSG), 230-331 (PPEK…VQPD), and 332-433 (PPVN…IPND). C36 and C46 are joined by a disulfide. N59 carries N-linked (GlcNAc...) asparagine glycosylation. Cysteines 75 and 86 form a disulfide. N-linked (GlcNAc...) asparagine glycans are attached at residues N91, N100, N112, N132, N262, N303, N315, and N335. Residues D414 and H416 each contribute to the Zn(2+) site. The WSXWS motif motif lies at 419–423 (WSEWS). The chain crosses the membrane as a helical span at residues 439 to 459 (MIVWIVLGVLSSLICLIMSWT). Residues 460-831 (MVLKGYRMIT…DPSSFMPSFK (372 aa)) lie on the Cytoplasmic side of the membrane. The short motif at 471–479 (MLPPVPGPK) is the Box 1 motif element. Disordered stretches follow at residues 527–563 (QQLM…SPSL), 774–796 (RVPH…QQGQ), and 808–831 (PSDC…PSFK). Positions 787–796 (ETSQSLQQGQ) are enriched in polar residues.

It belongs to the type I cytokine receptor family. Type 1 subfamily.

It localises to the membrane. In terms of biological role, this is a receptor for the anterior pituitary hormone prolactin. The protein is Prolactin receptor (PRLR) of Gallus gallus (Chicken).